The following is a 316-amino-acid chain: Annexin A13 (316 aa).

The N-myristoyl glycine moiety is linked to residue Gly2. 4 Annexin repeats span residues 14–85 (FDVD…ALLD), 86–157 (RPSE…SLLQ), 169–241 (DLAG…TLVR), and 245–316 (DCED…ALLH).

The protein belongs to the annexin family. As to quaternary structure, monomer and homodimer. As to expression, detected in epithelial cells in colon and jejunum (at protein level). Detected in epithelial cells in jejunum.

It is found in the apical cell membrane. The protein resides in the cell membrane. The protein localises to the cytoplasmic vesicle. Its function is as follows. Binds to membranes enriched in phosphatidylserine or phosphatidylglycerol in a calcium-dependent manner. Half-maximal membrane binding requires about 60 uM calcium. Does not bind to membranes that lack phospholipids with an acidic headgroup. In terms of biological role, binds to membranes enriched in phosphatidylserine or phosphatidylglycerol in a calcium-dependent manner, but requires higher calcium levels for membrane binding than isoform A. Half-maximal membrane binding requires about 320 uM calcium. The sequence is that of Annexin A13 (ANXA13) from Homo sapiens (Human).